A 243-amino-acid chain; its full sequence is Ribosomal RNA small subunit methyltransferase G (243 aa).

S-adenosyl-L-methionine-binding positions include G79, F84, 130–131 (AE), and R150. Residues 222-243 (KPTPNKYPRKPGIPNKQPLGGA) are disordered.

The protein belongs to the methyltransferase superfamily. RNA methyltransferase RsmG family.

It localises to the cytoplasm. In terms of biological role, specifically methylates the N7 position of a guanine in 16S rRNA. This is Ribosomal RNA small subunit methyltransferase G from Lacticaseibacillus paracasei (strain ATCC 334 / BCRC 17002 / CCUG 31169 / CIP 107868 / KCTC 3260 / NRRL B-441) (Lactobacillus paracasei).